Consider the following 184-residue polypeptide: Ribosome-recycling factor (184 aa).

Positions 134–167 (MNDQLKKDEKNGDITEDELRSGTEDVQKATDNSI) are disordered.

The protein belongs to the RRF family.

Its subcellular location is the cytoplasm. Functionally, responsible for the release of ribosomes from messenger RNA at the termination of protein biosynthesis. May increase the efficiency of translation by recycling ribosomes from one round of translation to another. In Staphylococcus aureus (strain Mu3 / ATCC 700698), this protein is Ribosome-recycling factor.